The following is a 329-amino-acid chain: Ribosomal RNA small subunit methyltransferase C (329 aa).

Belongs to the methyltransferase superfamily. RsmC family. As to quaternary structure, monomer.

It is found in the cytoplasm. The enzyme catalyses guanosine(1207) in 16S rRNA + S-adenosyl-L-methionine = N(2)-methylguanosine(1207) in 16S rRNA + S-adenosyl-L-homocysteine + H(+). Specifically methylates the guanine in position 1207 of 16S rRNA in the 30S particle. This Actinobacillus pleuropneumoniae serotype 5b (strain L20) protein is Ribosomal RNA small subunit methyltransferase C.